A 105-amino-acid polypeptide reads, in one-letter code: Protein FAM24A (105 aa).

Positions 1–32 (MAKMFDLRTKIMIGIGSSLLVAAMVLLSVVFC) are cleaved as a signal peptide.

It belongs to the FAM24 family.

It localises to the secreted. This is Protein FAM24A (FAM24A) from Homo sapiens (Human).